A 392-amino-acid chain; its full sequence is 8-amino-7-oxononanoate synthase 1 (392 aa).

109–110 (GF) contributes to the pyridoxal 5'-phosphate binding site. His-134 serves as a coordination point for substrate. Residues Ser-181, 206–209 (DDAH), and 237–240 (TLSK) contribute to the pyridoxal 5'-phosphate site. Lys-240 carries the N6-(pyridoxal phosphate)lysine modification. Thr-354 contacts substrate.

The protein belongs to the class-II pyridoxal-phosphate-dependent aminotransferase family. BioF subfamily. As to quaternary structure, homodimer. Pyridoxal 5'-phosphate serves as cofactor.

It carries out the reaction 6-carboxyhexanoyl-[ACP] + L-alanine + H(+) = (8S)-8-amino-7-oxononanoate + holo-[ACP] + CO2. It functions in the pathway cofactor biosynthesis; biotin biosynthesis. Functionally, catalyzes the decarboxylative condensation of pimeloyl-[acyl-carrier protein] and L-alanine to produce 8-amino-7-oxononanoate (AON), [acyl-carrier protein], and carbon dioxide. This is 8-amino-7-oxononanoate synthase 1 (kbl) from Bacillus subtilis (strain 168).